Reading from the N-terminus, the 279-residue chain is Four and a half LIM domains protein 2 (279 aa).

The C4-type zinc finger occupies 7–31 (CHHCNESLYGKKYILKEENPHCVAC). LIM zinc-binding domains lie at 40 to 92 (CEEC…CTDC), 101 to 153 (CQEC…CVPC), and 162 to 212 (CVQC…CLTC). Residue Lys78 forms a Glycyl lysine isopeptide (Lys-Gly) (interchain with G-Cter in SUMO2) linkage. Residues Lys167 and Lys220 each participate in a glycyl lysine isopeptide (Lys-Gly) (interchain with G-Cter in SUMO2) cross-link. An LIM zinc-binding 4 domain is found at 221 to 275 (CAGCTNPISGLGGTKYISFEERQWHNDCFNCKKCSLSLVGRGFLTERDDILCPDC). Position 238 is a phosphoserine (Ser238).

As to quaternary structure, interacts with ZNF638 and TTN/titin. Interacts with E4F1. Interacts with GRB7. Interacts with SIRT1 and FOXO1. Interacts with CEFIP and calcineurin. Interacts with FOXK1. As to expression, expressed in heart only (at protein level).

Its subcellular location is the cytoplasm. It is found in the nucleus. It localises to the myofibril. The protein resides in the sarcomere. The protein localises to the z line. May function as a molecular transmitter linking various signaling pathways to transcriptional regulation. Negatively regulates the transcriptional repressor E4F1 and may function in cell growth. Inhibits the transcriptional activity of FOXO1 and its apoptotic function by enhancing the interaction of FOXO1 with SIRT1 and FOXO1 deacetylation. Negatively regulates the calcineurin/NFAT signaling pathway in cardiomyocytes. In Rattus norvegicus (Rat), this protein is Four and a half LIM domains protein 2 (Fhl2).